Consider the following 528-residue polypeptide: Lysine--tRNA ligase (528 aa).

Residues 36–44 (PSGTVHIGN) carry the 'HIGH' region motif. A 'KMSKS' region motif is present at residues 287-291 (KMSSS).

The protein belongs to the class-I aminoacyl-tRNA synthetase family.

Its subcellular location is the cytoplasm. It catalyses the reaction tRNA(Lys) + L-lysine + ATP = L-lysyl-tRNA(Lys) + AMP + diphosphate. This is Lysine--tRNA ligase (lysS) from Treponema pallidum (strain Nichols).